We begin with the raw amino-acid sequence, 1239 residues long: MSSAPRRPAKGADSFCTPEPESLGPGTPGFPEQEEDELHRTLGVERFEEILQEAGSRGGEEPGRSYGEEDFEYHRQSSHHIHHPLSTHLPPDARRRKTPQGPGRKPRRRPGASPTGETPTIEEGEEDEDEASEAEGARALTQPSPVSTPSSVQFFLQEDDSADRKAERTSPSSPAPLPHQEATPRASKGAQAGTQVEEAEAVAVASGTAGGDDGGASGRPLPKAQPGHRSYNLQERRRIGSMTGAEQALLPRVPTDEIEAQTLATADLDLMKSHRFEDVPGVRRHLVRKNAKGSTQSGREGREPGPTPRARPRAPHKPHEVFVELNELLLDKNQEPQWRETARWIKFEEDVEEETERWGKPHVASLSFRSLLELRRTLAHGAVLLDLDQQTLPGVAHQVVEQMVISDQIKAEDRANVLRALLLKHSHPSDEKDFSFPRNISAGSLGSLLGHHHGQGAESDPHVTEPLIGGVPETRLEVERERELPPPAPPAGITRSKSKHELKLLEKIPENAEATVVLVGCVEFLSRPTMAFVRLREAVELDAVLEVPVPVRFLFLLLGPSSANMDYHEIGRSISTLMSDKQFHEAAYLADEREDLLTAINAFLDCSVVLPPSEVQGEELLRSVAHFQRQMLKKREEQGRLLPTGAGLEPKSAQDKALLQMVEAAGAAEDDPLRRTGRPFGGLIRDVRRRYPHYLSDFRDALDPQCLAAVIFIYFAALSPAITFGGLLGEKTQDLIGVSELIMSTALQGVVFCLLGAQPLLVIGFSGPLLVFEEAFFSFCSSNHLEYLVGRVWIGFWLVLLALLMVALEGSFLVRFVSRFTQEIFAFLISLIFIYETFYKLVKIFQEHPLHGCSASNSSEVDGGENMTWAVARPTLGPGNRSLAGQSGQGKPRGQPNTALLSLVLMAGTFFIAFFLRKFKNSRFFPGRIRRVIGDFGVPIAILIMVLVDYSIEDTYTQKLSVPSGFSVTAPEKRGWVINPLGEKSPFPVWMMVASLLPAILVFILIFMETQITTLIISKKERMLQKGSGFHLDLLLIVAMGGICALFGLPWLAAATVRSVTHANALTVMSKAVAPGDKPKIQEVKEQRVTGLLVALLVGLSIVIGDLLRQIPLAVLFGIFLYMGVTSLNGIQFYERLHLLLMPPKHHPDVTYVKKVRTLRMHLFTALQLLCLALLWAVMSTAASLAFPFILILTVPLRMVVLTRIFTDREMKCLDANEAEPVFDEREGVDEYNEMPMPV.

The segment at 1 to 237 is disordered; the sequence is MSSAPRRPAK…HRSYNLQERR (237 aa). Residues 1-706 are Cytoplasmic-facing; the sequence is MSSAPRRPAK…DFRDALDPQC (706 aa). Composition is skewed to basic and acidic residues over residues 37–49 and 58–75; these read ELHR…RFEE and GGEE…EYHR. Composition is skewed to basic residues over residues 76–85 and 94–110; these read QSSHHIHHPL and RRRK…RRRP. 5 positions are modified to phosphoserine: Ser113, Ser132, Ser144, Ser170, and Ser172. A compositionally biased stretch (acidic residues) spans 120 to 133; that stretch reads TIEEGEEDEDEASE. Residues 141 to 155 show a composition bias toward low complexity; that stretch reads TQPSPVSTPSSVQFF. Positions 189–207 are enriched in low complexity; the sequence is GAQAGTQVEEAEAVAVASG. Residues 208 to 217 are compositionally biased toward gly residues; it reads TAGGDDGGAS. Ser241 bears the Phosphoserine mark. Thr255 bears the Phosphothreonine mark. Lys272 carries the post-translational modification N6-methyllysine. Positions 285 to 318 are disordered; that stretch reads HLVRKNAKGSTQSGREGREPGPTPRARPRAPHKP. Phosphoserine is present on Ser441. Positions 447–468 are disordered; sequence SLLGHHHGQGAESDPHVTEPLI. 2 membrane (anion exchange) regions span residues 706–1239 and 708–1239; these read CLAA…PMPV and AAVI…PMPV. Transmembrane regions (helical) follow at residues 707–727, 752–772, 794–814, and 824–844; these read LAAV…FGGL, FCLL…LLVF, IGFW…SFLV, and IFAF…LVKI. Residues 845 to 895 are Extracellular-facing; the sequence is FQEHPLHGCSASNSSEVDGGENMTWAVARPTLGPGNRSLAGQSGQGKPRGQ. N-linked (GlcNAc...) asparagine glycans are attached at residues Asn857, Asn866, and Asn880. A helical membrane pass occupies residues 896-916; that stretch reads PNTALLSLVLMAGTFFIAFFL. The Cytoplasmic portion of the chain corresponds to 917 to 931; the sequence is RKFKNSRFFPGRIRR. 5 consecutive transmembrane segments (helical) span residues 932–952, 987–1007, 1034–1054, 1088–1108, and 1111–1131; these read VIGD…DYSI, FPVW…ILIF, LLLI…WLAA, RVTG…GDLL, and IPLA…LNGI. The S-palmitoyl cysteine moiety is linked to residue Cys1171. A helical membrane pass occupies residues 1172 to 1192; it reads LALLWAVMSTAASLAFPFILI.

This sequence belongs to the anion exchanger (TC 2.A.31) family.

The protein resides in the apical cell membrane. The protein localises to the basolateral cell membrane. It carries out the reaction hydrogencarbonate(in) + chloride(out) = hydrogencarbonate(out) + chloride(in). Its function is as follows. Sodium-independent anion exchanger which mediates the electroneutral exchange of chloride for bicarbonate ions across the cell membrane. Plays an important role in osteoclast differentiation and function. Regulates bone resorption and calpain-dependent actin cytoskeleton organization in osteoclasts via anion exchange-dependent control of pH. Essential for intracellular pH regulation in CD8(+) T-cells upon CD3 stimulation, modulating CD8(+) T-cell response. The polypeptide is Anion exchange protein 2 (SLC4A2) (Pongo abelii (Sumatran orangutan)).